A 25-amino-acid chain; its full sequence is Ribosome-inactivating protein velutin (25 aa).

The interval 1 to 25 is disordered; sequence XHPDLFXXRPDNTASPKFEDPRLNP.

The protein belongs to the ribosome-inactivating protein family.

It carries out the reaction Endohydrolysis of the N-glycosidic bond at one specific adenosine on the 28S rRNA.. In terms of biological role, inhibits protein synthesis but does not possess ribonuclease activity. Also inhibits HIV-1 reverse transcriptase, beta-glucosidase and beta-glucuronidase. The chain is Ribosome-inactivating protein velutin from Flammulina velutipes (Agaricus velutipes).